Consider the following 253-residue polypeptide: Imidazole glycerol phosphate synthase subunit HisF (253 aa).

Catalysis depends on residues Asp11 and Asp130.

This sequence belongs to the HisA/HisF family. Heterodimer of HisH and HisF.

Its subcellular location is the cytoplasm. It catalyses the reaction 5-[(5-phospho-1-deoxy-D-ribulos-1-ylimino)methylamino]-1-(5-phospho-beta-D-ribosyl)imidazole-4-carboxamide + L-glutamine = D-erythro-1-(imidazol-4-yl)glycerol 3-phosphate + 5-amino-1-(5-phospho-beta-D-ribosyl)imidazole-4-carboxamide + L-glutamate + H(+). Its pathway is amino-acid biosynthesis; L-histidine biosynthesis; L-histidine from 5-phospho-alpha-D-ribose 1-diphosphate: step 5/9. IGPS catalyzes the conversion of PRFAR and glutamine to IGP, AICAR and glutamate. The HisF subunit catalyzes the cyclization activity that produces IGP and AICAR from PRFAR using the ammonia provided by the HisH subunit. The polypeptide is Imidazole glycerol phosphate synthase subunit HisF (Myxococcus xanthus (strain DK1622)).